Consider the following 137-residue polypeptide: Large ribosomal subunit protein uL16 (137 aa).

The protein belongs to the universal ribosomal protein uL16 family. Part of the 50S ribosomal subunit.

In terms of biological role, binds 23S rRNA and is also seen to make contacts with the A and possibly P site tRNAs. The chain is Large ribosomal subunit protein uL16 from Cereibacter sphaeroides (strain ATCC 17025 / ATH 2.4.3) (Rhodobacter sphaeroides).